We begin with the raw amino-acid sequence, 985 residues long: Bifunctional glutamine synthetase adenylyltransferase/adenylyl-removing enzyme (985 aa).

The tract at residues 1–472 (MTSSAPGNAD…HYARLFEGDP (472 aa)) is adenylyl removase. The segment at 477 to 985 (SLPPVNYGAG…RRVFTSLLEE (509 aa)) is adenylyl transferase.

The protein belongs to the GlnE family. Requires Mg(2+) as cofactor.

The enzyme catalyses [glutamine synthetase]-O(4)-(5'-adenylyl)-L-tyrosine + phosphate = [glutamine synthetase]-L-tyrosine + ADP. It carries out the reaction [glutamine synthetase]-L-tyrosine + ATP = [glutamine synthetase]-O(4)-(5'-adenylyl)-L-tyrosine + diphosphate. Functionally, involved in the regulation of glutamine synthetase GlnA, a key enzyme in the process to assimilate ammonia. When cellular nitrogen levels are high, the C-terminal adenylyl transferase (AT) inactivates GlnA by covalent transfer of an adenylyl group from ATP to specific tyrosine residue of GlnA, thus reducing its activity. Conversely, when nitrogen levels are low, the N-terminal adenylyl removase (AR) activates GlnA by removing the adenylyl group by phosphorolysis, increasing its activity. The regulatory region of GlnE binds the signal transduction protein PII (GlnB) which indicates the nitrogen status of the cell. This chain is Bifunctional glutamine synthetase adenylyltransferase/adenylyl-removing enzyme, found in Bradyrhizobium sp. (strain BTAi1 / ATCC BAA-1182).